Here is an 86-residue protein sequence, read N- to C-terminus: Large ribosomal subunit protein bL27 (86 aa).

Residues 1–11 show a composition bias toward gly residues; that stretch reads MATKKAGGGSR. Positions 1-24 are disordered; it reads MATKKAGGGSRNGRDSAGRRLGVK.

The protein belongs to the bacterial ribosomal protein bL27 family.

The sequence is that of Large ribosomal subunit protein bL27 from Rickettsia africae (strain ESF-5).